A 363-amino-acid polypeptide reads, in one-letter code: Phosphoserine aminotransferase (363 aa).

Serine 9 and arginine 42 together coordinate L-glutamate. Pyridoxal 5'-phosphate contacts are provided by residues 76–77, tryptophan 102, threonine 154, aspartate 174, and glutamine 197; that span reads AR. The residue at position 198 (lysine 198) is an N6-(pyridoxal phosphate)lysine. Position 240–241 (240–241) interacts with pyridoxal 5'-phosphate; sequence NT.

Belongs to the class-V pyridoxal-phosphate-dependent aminotransferase family. SerC subfamily. In terms of assembly, homodimer. It depends on pyridoxal 5'-phosphate as a cofactor.

It localises to the cytoplasm. The enzyme catalyses O-phospho-L-serine + 2-oxoglutarate = 3-phosphooxypyruvate + L-glutamate. The catalysed reaction is 4-(phosphooxy)-L-threonine + 2-oxoglutarate = (R)-3-hydroxy-2-oxo-4-phosphooxybutanoate + L-glutamate. It functions in the pathway amino-acid biosynthesis; L-serine biosynthesis; L-serine from 3-phospho-D-glycerate: step 2/3. The protein operates within cofactor biosynthesis; pyridoxine 5'-phosphate biosynthesis; pyridoxine 5'-phosphate from D-erythrose 4-phosphate: step 3/5. Catalyzes the reversible conversion of 3-phosphohydroxypyruvate to phosphoserine and of 3-hydroxy-2-oxo-4-phosphonooxybutanoate to phosphohydroxythreonine. The protein is Phosphoserine aminotransferase of Baumannia cicadellinicola subsp. Homalodisca coagulata.